The sequence spans 145 residues: Synaptojanin-2-binding protein (145 aa).

Topologically, residues 1 to 117 (MNGRVDYLVT…GPQGEGEPSG (117 aa)) are cytoplasmic. A PDZ domain is found at 13 to 100 (EINLTRGPSG…AVSLRVQHRL (88 aa)). Residues 118–138 (IPIAMVLVPVFALTMVAAWAF) traverse the membrane as a helical; Anchor for type IV membrane protein segment. The Mitochondrial intermembrane portion of the chain corresponds to 139–145 (MRYRQRL).

In terms of assembly, binds (via the PDZ domain) to isoform 2A of SYNJ2 (via the unique motif in the C-terminus). Interacts (via C-terminus) with RALBP1. Interacts (via PDZ domain) with ACVR2A (via C-terminus) and ACVR2B (via C-terminus). Forms a ternary complex with ACVR2A and RALBP1. Interacts with MAPK12. Interacts with DLL1; enhances DLL1 protein stability, and promotes notch signaling in endothelial cells.

It localises to the mitochondrion outer membrane. Its subcellular location is the cytoplasm. It is found in the perinuclear region. Its function is as follows. Regulates endocytosis of activin type 2 receptor kinases through the Ral/RALBP1-dependent pathway and may be involved in suppression of activin-induced signal transduction. The protein is Synaptojanin-2-binding protein of Bos taurus (Bovine).